We begin with the raw amino-acid sequence, 469 residues long: Glutamate--tRNA ligase 1 (469 aa).

The 'HIGH' region motif lies at 9–19 (PSPTGYLHVGG). Zn(2+) is bound by residues C98, C100, C125, and E127. The short motif at 236-240 (RLSKR) is the 'KMSKS' region element. K239 serves as a coordination point for ATP.

Belongs to the class-I aminoacyl-tRNA synthetase family. Glutamate--tRNA ligase type 1 subfamily. Monomer. It depends on Zn(2+) as a cofactor.

The protein resides in the cytoplasm. It catalyses the reaction tRNA(Glu) + L-glutamate + ATP = L-glutamyl-tRNA(Glu) + AMP + diphosphate. Catalyzes the attachment of glutamate to tRNA(Glu) in a two-step reaction: glutamate is first activated by ATP to form Glu-AMP and then transferred to the acceptor end of tRNA(Glu). The polypeptide is Glutamate--tRNA ligase 1 (Nitrosococcus oceani (strain ATCC 19707 / BCRC 17464 / JCM 30415 / NCIMB 11848 / C-107)).